We begin with the raw amino-acid sequence, 116 residues long: Ferredoxin (116 aa).

4Fe-4S ferredoxin-type domains lie at 2–31 and 35–64; these read TYVV…EGER and FMLV…PESP. [3Fe-4S] cluster is bound by residues Cys-9 and Cys-17. [4Fe-4S] cluster-binding residues include Cys-21, Cys-44, Cys-47, and Cys-50. Position 54 (Cys-54) interacts with [3Fe-4S] cluster.

The cofactor is [4Fe-4S] cluster. It depends on [3Fe-4S] cluster as a cofactor.

Its function is as follows. Ferredoxins are iron-sulfur proteins that transfer electrons in a wide variety of metabolic reactions. The sequence is that of Ferredoxin (fdxA) from Rickettsia conorii (strain ATCC VR-613 / Malish 7).